Reading from the N-terminus, the 353-residue chain is Sulfate/thiosulfate import ATP-binding protein CysA (353 aa).

Positions 3-237 (IQVKNIEKHF…PATPFVFDFL (235 aa)) constitute an ABC transporter domain. 35 to 42 (GPSGCGKT) contributes to the ATP binding site.

This sequence belongs to the ABC transporter superfamily. Sulfate/tungstate importer (TC 3.A.1.6) family. In terms of assembly, the complex is composed of two ATP-binding proteins (CysA), two transmembrane proteins (CysT and CysW) and a solute-binding protein (CysP).

The protein localises to the cell inner membrane. The catalysed reaction is sulfate(out) + ATP + H2O = sulfate(in) + ADP + phosphate + H(+). It catalyses the reaction thiosulfate(out) + ATP + H2O = thiosulfate(in) + ADP + phosphate + H(+). In terms of biological role, part of the ABC transporter complex CysAWTP involved in sulfate/thiosulfate import. Responsible for energy coupling to the transport system. The sequence is that of Sulfate/thiosulfate import ATP-binding protein CysA from Acinetobacter baylyi (strain ATCC 33305 / BD413 / ADP1).